A 466-amino-acid polypeptide reads, in one-letter code: Probable fibrosin-1 (466 aa).

Residue lysine 8 forms a Glycyl lysine isopeptide (Lys-Gly) (interchain with G-Cter in SUMO2) linkage. An asymmetric dimethylarginine mark is found at arginine 229 and arginine 239. 2 disordered regions span residues 236–315 (AWVR…AAAA) and 410–466 (LLYS…RADR). Residues 248 to 272 (GSDKERPMERREPSVTKEEKDRDLP) are compositionally biased toward basic and acidic residues. Serine 281 carries the post-translational modification Phosphoserine. Basic and acidic residues predominate over residues 288 to 311 (RAGEEGARPAKESVRVKEERKEEA). The span at 442 to 459 (APPPLVPAPRPSSPPRAP) shows a compositional bias: pro residues.

In Mus musculus (Mouse), this protein is Probable fibrosin-1 (Fbrs).